Consider the following 352-residue polypeptide: Thiosulfate transporter TsuA (352 aa).

A helical transmembrane segment spans residues 1–21; sequence MFSMILSGLICGALLGFVMQR. Residues 22–44 are Cytoplasmic-facing; sequence GRFCLTGGFRDMYIVKNNRMFYA. Residues 45 to 65 traverse the membrane as a helical segment; it reads LLIAISVQSVGVFALIQAGLL. Residues 66-70 lie on the Periplasmic side of the membrane; it reads TYEAG. A helical membrane pass occupies residues 71 to 91; the sequence is AFPWLGTVIGGYIFGLGIVLA. Residues 92–102 lie on the Cytoplasmic side of the membrane; the sequence is GGCATGTWYRA. Residues 103 to 123 form a helical membrane-spanning segment; that stretch reads GEGLIGSWIALFTYMVMSAVM. Topologically, residues 124–148 are periplasmic; that stretch reads RSPHASGLNQTLQHYSTEHNSIAET. The chain crosses the membrane as a helical span at residues 149 to 169; the sequence is FNLSVWPLVAVLLVITLWVVM. The Cytoplasmic segment spans residues 170–197; the sequence is KELKKPKLKVATLPPRRTGIAHILFEKR. Residues 198 to 218 traverse the membrane as a helical segment; that stretch reads WHPFVTAVLIGLIALLAWPLS. Residues 219-247 are Periplasmic-facing; the sequence is EATGRMFGLGITSPTANILQFLVAGDMKY. The chain crosses the membrane as a helical span at residues 248–268; that stretch reads INWGVFLVLGIFVGSFIAAKA. Residues 269-289 lie on the Cytoplasmic side of the membrane; it reads SREFRVRAADAQTTLRSGLGG. A helical transmembrane segment spans residues 290–310; it reads VLMGFGASIAGGCSIGNGLVM. The Periplasmic portion of the chain corresponds to 311-317; the sequence is TAMMTWQ. The chain crosses the membrane as a helical span at residues 318 to 338; that stretch reads GWIGLVFMILGVWTASWLVYV. Residues 339–352 lie on the Cytoplasmic side of the membrane; that stretch reads RPQRKARLATAAAN.

It belongs to the TsuA/YedE (TC 9.B.102) family.

It localises to the cell inner membrane. The catalysed reaction is thiosulfate(in) = thiosulfate(out). Mediates thiosulfate uptake. In Escherichia coli (strain K12), this protein is Thiosulfate transporter TsuA.